The following is a 174-amino-acid chain: Eukaryotic translation elongation factor 1 epsilon-1 (174 aa).

Residue alanine 2 is modified to N-acetylalanine. Residues 2–56 form an N-terminal region; it reads AAAAELSLLEKSLGLSKGNKYSAQGERQIPVLQTNNGPSLTGLTTIAAHLVKQAN. The 124-residue stretch at 50–173 folds into the GST C-terminal domain; it reads HLVKQANKEY…FIKNRLYTNS (124 aa). Positions 57–63 are linker; that stretch reads KEYLLGS. Residues 64–152 are C-terminal; it reads TAEEKAIVQQ…SRWFCHIQHY (89 aa). Lysine 138 bears the N6-acetyllysine mark. A coiled-coil region spans residues 153–169; it reads PGIRQHLSSVVFIKNRL.

As to quaternary structure, part of a multisubunit complex that groups tRNA ligases for Arg (RARS1), Asp (DARS1), Gln (QARS1), Ile (IARS1), Leu (LARS1), Lys (KARS1), Met (MARS1) the bifunctional ligase for Glu and Pro (EPRS1) and the auxiliary subunits AIMP1/p43, AIMP2/p38 and EEF1E1/p18. Can interact simultaneously with MARS1 and EPRS1. Forms a linear complex that contains MARS1, EEF1E1, EPRS1 and AIMP2 that is at the core of the multisubunit complex. Interacts with ATM and ATR. The interaction with ATM, which takes place independently of TP53, is induced by DNA damage that may occur during genotoxic stress or cell growth. The interaction with ATR is enhanced by UV irradiation. In terms of tissue distribution, down-regulated in various cancer tissues.

It is found in the cytoplasm. It localises to the cytosol. The protein resides in the nucleus. In terms of biological role, positive modulator of ATM response to DNA damage. The chain is Eukaryotic translation elongation factor 1 epsilon-1 (EEF1E1) from Homo sapiens (Human).